A 326-amino-acid polypeptide reads, in one-letter code: Large ribosomal subunit protein uL4 (326 aa).

Positions 1–211 (MASCVVKNWQ…EKLKARWGSG (211 aa)) are large ribosomal subunit protein uL4. Disordered regions lie at residues 44-76 (ARQG…ARAG) and 211-326 (GAAA…EDND). Positions 60 to 71 (GGRKPWRQKGTG) are enriched in basic residues. The tract at residues 212–326 (AAAAAPTQAD…TAAAEEEDND (115 aa)) is unknown. Positions 221-238 (DRLEDQAQAAEREARPVE) are enriched in basic and acidic residues. 2 stretches are compositionally biased toward low complexity: residues 252–279 (EAQA…QVQE) and 294–312 (QGQA…PPAG). Over residues 313–326 (EEAETAAAEEEDND) the composition is skewed to acidic residues.

Belongs to the universal ribosomal protein uL4 family. In terms of assembly, part of the 50S ribosomal subunit.

One of the primary rRNA binding proteins, this protein initially binds near the 5'-end of the 23S rRNA. It is important during the early stages of 50S assembly. It makes multiple contacts with different domains of the 23S rRNA in the assembled 50S subunit and ribosome. Its function is as follows. Forms part of the polypeptide exit tunnel. This is Large ribosomal subunit protein uL4 from Synechococcus sp. (strain JA-3-3Ab) (Cyanobacteria bacterium Yellowstone A-Prime).